The sequence spans 377 residues: Transcription factor EC (377 aa).

The bHLH domain occupies 169-222; the sequence is QKKDNHNLIERRRRYNINYRIKELGTLIPKSNDPDMRWNKGTILKASVEYIKWL. A disordered region spans residues 349–377; the sequence is DPLLSSTSPAASKESSRRSSFSTDDGDDL. A compositionally biased stretch (low complexity) spans 353-370; that stretch reads SSTSPAASKESSRRSSFS.

This sequence belongs to the MiT/TFE family.

It is found in the nucleus. Transcriptional regulator that acts as a repressor or an activator. Binds DNA. The protein is Transcription factor EC (TFEC) of Gallus gallus (Chicken).